The primary structure comprises 364 residues: Alanine racemase (364 aa).

The Proton acceptor; specific for D-alanine role is filled by Lys39. Lys39 is subject to N6-(pyridoxal phosphate)lysine. Position 137 (Arg137) interacts with substrate. Tyr258 functions as the Proton acceptor; specific for L-alanine in the catalytic mechanism. A substrate-binding site is contributed by Met306.

This sequence belongs to the alanine racemase family. Pyridoxal 5'-phosphate is required as a cofactor.

The enzyme catalyses L-alanine = D-alanine. The protein operates within amino-acid biosynthesis; D-alanine biosynthesis; D-alanine from L-alanine: step 1/1. In terms of biological role, catalyzes the interconversion of L-alanine and D-alanine. May also act on other amino acids. The polypeptide is Alanine racemase (alr) (Methylobacterium sp. (strain 4-46)).